The following is a 338-amino-acid chain: Nicotinate-nucleotide--dimethylbenzimidazole phosphoribosyltransferase (338 aa).

The active-site Proton acceptor is Glu305.

This sequence belongs to the CobT family.

The catalysed reaction is 5,6-dimethylbenzimidazole + nicotinate beta-D-ribonucleotide = alpha-ribazole 5'-phosphate + nicotinate + H(+). Its pathway is nucleoside biosynthesis; alpha-ribazole biosynthesis; alpha-ribazole from 5,6-dimethylbenzimidazole: step 1/2. Functionally, catalyzes the synthesis of alpha-ribazole-5'-phosphate from nicotinate mononucleotide (NAMN) and 5,6-dimethylbenzimidazole (DMB). This Rhizobium etli (strain CIAT 652) protein is Nicotinate-nucleotide--dimethylbenzimidazole phosphoribosyltransferase.